The following is a 182-amino-acid chain: Putative manganese efflux pump MntP (182 aa).

The next 6 helical transmembrane spans lie at 7-27 (IISIILLAIGLSMDGFSVSLG), 38-58 (IAYIGLTIGFLHMLMPLAGML), 71-91 (TSFAGGVLLFLIGAHMFFSAF), 106-126 (LWIIAFSVSLDSFTVGLGLGI), 131-151 (IFVTLFAFGIVSCFLTWLGML), and 159-179 (FLGVYSELLGGSILCGFGIFI).

This sequence belongs to the MntP (TC 9.B.29) family.

It is found in the cell membrane. In terms of biological role, probably functions as a manganese efflux pump. The protein is Putative manganese efflux pump MntP of Oceanobacillus iheyensis (strain DSM 14371 / CIP 107618 / JCM 11309 / KCTC 3954 / HTE831).